Reading from the N-terminus, the 128-residue chain is Large ribosomal subunit protein bL20 (128 aa).

The protein belongs to the bacterial ribosomal protein bL20 family.

Functionally, binds directly to 23S ribosomal RNA and is necessary for the in vitro assembly process of the 50S ribosomal subunit. It is not involved in the protein synthesizing functions of that subunit. This chain is Large ribosomal subunit protein bL20, found in Corynebacterium efficiens (strain DSM 44549 / YS-314 / AJ 12310 / JCM 11189 / NBRC 100395).